The sequence spans 158 residues: Ribonuclease H (158 aa).

An RNase H type-1 domain is found at 3–144; sequence ELKLIHIFTD…CDQLARAAAE (142 aa). Mg(2+) is bound by residues D12, E50, D72, and D136.

This sequence belongs to the RNase H family. Monomer. Mg(2+) is required as a cofactor.

The protein localises to the cytoplasm. It catalyses the reaction Endonucleolytic cleavage to 5'-phosphomonoester.. In terms of biological role, endonuclease that specifically degrades the RNA of RNA-DNA hybrids. The protein is Ribonuclease H of Shewanella sp. (strain MR-7).